The chain runs to 324 residues: Glyoxylate/hydroxypyruvate reductase B (324 aa).

Catalysis depends on residues R237 and E266. The Proton donor role is filled by H285.

It belongs to the D-isomer specific 2-hydroxyacid dehydrogenase family. GhrB subfamily. Homodimer.

It is found in the cytoplasm. The catalysed reaction is glycolate + NADP(+) = glyoxylate + NADPH + H(+). It carries out the reaction (R)-glycerate + NAD(+) = 3-hydroxypyruvate + NADH + H(+). The enzyme catalyses (R)-glycerate + NADP(+) = 3-hydroxypyruvate + NADPH + H(+). Functionally, catalyzes the NADPH-dependent reduction of glyoxylate and hydroxypyruvate into glycolate and glycerate, respectively. The polypeptide is Glyoxylate/hydroxypyruvate reductase B (Shigella dysenteriae serotype 1 (strain Sd197)).